Reading from the N-terminus, the 66-residue chain is Neurotoxin Cex11 (66 aa).

In terms of domain architecture, LCN-type CS-alpha/beta spans 1–64; sequence KEGYPVNIYT…SYPYPEKSCG (64 aa). Intrachain disulfides connect C12-C63, C16-C39, C25-C44, and C29-C46. Position 63 is a cysteine amide (C63). Residues 64–66 constitute a propeptide that is removed on maturation; the sequence is GRK.

It belongs to the long (4 C-C) scorpion toxin superfamily. Sodium channel inhibitor family. Beta subfamily. In terms of tissue distribution, expressed by the venom gland.

It is found in the secreted. Its function is as follows. Beta toxins bind voltage-independently at site-4 of sodium channels (Nav) and shift the voltage of activation toward more negative potentials thereby affecting sodium channel activation and promoting spontaneous and repetitive firing. This Centruroides exilicauda (Bark scorpion) protein is Neurotoxin Cex11.